Reading from the N-terminus, the 976-residue chain is Poly(ADP-ribose) glycohydrolase (976 aa).

An N-acetylmethionine modification is found at Met1. The disordered stretch occupies residues 1–69 (MNAGPGCEPC…GRAGQHRGSA (69 aa)). The tract at residues 1–456 (MNAGPGCEPC…LSPDKKWLGT (456 aa)) is A-domain. The short motif at 10–16 (CTKRPRW) is the Nuclear localization signal element. The residue at position 22 (Ser22) is a Phosphoserine. A compositionally biased stretch (basic and acidic residues) spans 37-46 (RVLDPKDAHV). Residue Ser68 is modified to Phosphoserine. The PIP-box (PCNA interacting peptide) motif lies at 76-83 (QKTITSWM). Ser133 and Ser137 each carry phosphoserine. Position 139 is a phosphothreonine (Thr139). A disordered region spans residues 183–350 (SNANIDRSPQ…PSRFQARDAD (168 aa)). Composition is skewed to basic and acidic residues over residues 191–206 (PQNDDHSDTDSEENRD) and 222–233 (TTEDEQAREAKS). Residue Ser197 is modified to Phosphoserine. Phosphothreonine is present on Thr199. A phosphoserine mark is found at Ser261, Ser264, Ser286, Ser291, Ser298, Ser302, and Ser316. The segment covering 316–331 (SEADEETSPGFDEQED) has biased composition (acidic residues). Residues 332–342 (GSSSQTANKPS) are compositionally biased toward polar residues. Lys340 carries the N6-acetyllysine modification. A Phosphoserine modification is found at Ser448. The segment at 610-795 (QPIPLLKQKM…TEQYSEYTGY (186 aa)) is catalytic. 726–727 (IE) serves as a coordination point for substrate. Asp737 is an active-site residue. 2 residues coordinate substrate: Asn740 and Gln754. Residues Glu755 and Glu756 contribute to the active site. Substrate contacts are provided by residues Tyr795 and 869–874 (NWGCGA).

It belongs to the poly(ADP-ribose) glycohydrolase family. Interacts with PCNA. Interacts with NUDT5. As to expression, ubiquitously expressed.

It localises to the nucleus. The protein localises to the cytoplasm. The protein resides in the mitochondrion. Its subcellular location is the mitochondrion matrix. The catalysed reaction is [(1''-&gt;2')-ADP-alpha-D-ribose](n) + H2O = [(1''-&gt;2')-ADP-alpha-D-ribose](n-1) + ADP-D-ribose. Functionally, poly(ADP-ribose) glycohydrolase that degrades poly(ADP-ribose) by hydrolyzing the ribose-ribose bonds present in poly(ADP-ribose). PARG acts both as an endo- and exoglycosidase, releasing poly(ADP-ribose) of different length as well as ADP-ribose monomers. It is however unable to cleave the ester bond between the terminal ADP-ribose and ADP-ribosylated residues, leaving proteins that are mono-ADP-ribosylated. Poly(ADP-ribose) is synthesized after DNA damage is only present transiently and is rapidly degraded by PARG. Required to prevent detrimental accumulation of poly(ADP-ribose) upon prolonged replicative stress, while it is not required for recovery from transient replicative stress. Responsible for the prevalence of mono-ADP-ribosylated proteins in cells, thanks to its ability to degrade poly(ADP-ribose) without cleaving the terminal protein-ribose bond. Required for retinoid acid-dependent gene transactivation, probably by removing poly(ADP-ribose) from histone demethylase KDM4D, allowing chromatin derepression at RAR-dependent gene promoters. Involved in the synthesis of ATP in the nucleus, together with PARP1, NMNAT1 and NUDT5. Nuclear ATP generation is required for extensive chromatin remodeling events that are energy-consuming. The protein is Poly(ADP-ribose) glycohydrolase of Homo sapiens (Human).